The following is a 133-amino-acid chain: p53 and DNA damage-regulated protein 1 (133 aa).

This sequence belongs to the prefoldin subunit beta family. In terms of assembly, component of the PAQosome complex which is responsible for the biogenesis of several protein complexes and which consists of R2TP complex members RUVBL1, RUVBL2, RPAP3 and PIH1D1, URI complex members PFDN2, PFDN6, PDRG1, UXT and URI1 as well as ASDURF, POLR2E and DNAAF10/WDR92.

The protein resides in the cytoplasm. In terms of biological role, may play a role in chaperone-mediated protein folding. The chain is p53 and DNA damage-regulated protein 1 (PDRG1) from Pongo abelii (Sumatran orangutan).